An 85-amino-acid polypeptide reads, in one-letter code: RNA-binding protein Hfq (85 aa).

A Sm domain is found at 9–69 (DQLLNTARKD…ISTIIPAKII (61 aa)).

This sequence belongs to the Hfq family. As to quaternary structure, homohexamer.

Functionally, RNA chaperone that binds small regulatory RNA (sRNAs) and mRNAs to facilitate mRNA translational regulation in response to envelope stress, environmental stress and changes in metabolite concentrations. Also binds with high specificity to tRNAs. The polypeptide is RNA-binding protein Hfq (Leptospira interrogans serogroup Icterohaemorrhagiae serovar copenhageni (strain Fiocruz L1-130)).